Consider the following 301-residue polypeptide: Probable 5-dehydro-4-deoxyglucarate dehydratase (301 aa).

The protein belongs to the DapA family.

It carries out the reaction 5-dehydro-4-deoxy-D-glucarate + H(+) = 2,5-dioxopentanoate + CO2 + H2O. It functions in the pathway carbohydrate acid metabolism; D-glucarate degradation; 2,5-dioxopentanoate from D-glucarate: step 2/2. In Allorhizobium ampelinum (strain ATCC BAA-846 / DSM 112012 / S4) (Agrobacterium vitis (strain S4)), this protein is Probable 5-dehydro-4-deoxyglucarate dehydratase.